Here is a 225-residue protein sequence, read N- to C-terminus: UPF0758 protein BCG9842_B0662 (225 aa).

The region spanning 103 to 225 is the MPN domain; that stretch reads SIRSPEDCAK…FVSLKEKGHI (123 aa). Zn(2+)-binding residues include H174, H176, and D187. The short motif at 174–187 is the JAMM motif element; it reads HNHPSGDPTPSRED.

It belongs to the UPF0758 family.

This chain is UPF0758 protein BCG9842_B0662, found in Bacillus cereus (strain G9842).